The following is a 301-amino-acid chain: Methionyl-tRNA formyltransferase (301 aa).

Ser109–Pro112 is a binding site for (6S)-5,6,7,8-tetrahydrofolate.

Belongs to the Fmt family.

It catalyses the reaction L-methionyl-tRNA(fMet) + (6R)-10-formyltetrahydrofolate = N-formyl-L-methionyl-tRNA(fMet) + (6S)-5,6,7,8-tetrahydrofolate + H(+). Functionally, attaches a formyl group to the free amino group of methionyl-tRNA(fMet). The formyl group appears to play a dual role in the initiator identity of N-formylmethionyl-tRNA by promoting its recognition by IF2 and preventing the misappropriation of this tRNA by the elongation apparatus. The chain is Methionyl-tRNA formyltransferase from Novosphingobium aromaticivorans (strain ATCC 700278 / DSM 12444 / CCUG 56034 / CIP 105152 / NBRC 16084 / F199).